The following is a 136-amino-acid chain: MKLHIFKSKIHRATVTNADLYYEGSITIDMDLVDLAGMMPNEKVQVVNNNNGARFETYIIRGKRGSGTIQLNGAAARLASIGDEIIIITYAEMEPEEAKDYKPTVVLVDKKNRPKKIFQLGEETTPEEAPSLEQRN.

The active-site Schiff-base intermediate with substrate; via pyruvic acid is the Ser-25. Ser-25 is subject to Pyruvic acid (Ser). Residue Thr-57 participates in substrate binding. Tyr-58 acts as the Proton donor in catalysis. 73–75 (GAA) provides a ligand contact to substrate. The disordered stretch occupies residues 117–136 (IFQLGEETTPEEAPSLEQRN).

The protein belongs to the PanD family. Heterooctamer of four alpha and four beta subunits. It depends on pyruvate as a cofactor. Post-translationally, is synthesized initially as an inactive proenzyme, which is activated by self-cleavage at a specific serine bond to produce a beta-subunit with a hydroxyl group at its C-terminus and an alpha-subunit with a pyruvoyl group at its N-terminus.

The protein localises to the cytoplasm. The enzyme catalyses L-aspartate + H(+) = beta-alanine + CO2. The protein operates within cofactor biosynthesis; (R)-pantothenate biosynthesis; beta-alanine from L-aspartate: step 1/1. Functionally, catalyzes the pyruvoyl-dependent decarboxylation of aspartate to produce beta-alanine. The sequence is that of Aspartate 1-decarboxylase from Chloroherpeton thalassium (strain ATCC 35110 / GB-78).